The sequence spans 474 residues: Trigger factor (474 aa).

The PPIase FKBP-type domain occupies 174–261 (GDIAVVSFKG…LKDLKEKELP (88 aa)). Residues 435-474 (VKEKTTKTSKATKTSKTTKATKTASKTTKTTKTQNKKEKK) form a disordered region. Over residues 442-467 (TSKATKTSKTTKATKTASKTTKTTKT) the composition is skewed to low complexity.

It belongs to the FKBP-type PPIase family. Tig subfamily.

The protein localises to the cytoplasm. The enzyme catalyses [protein]-peptidylproline (omega=180) = [protein]-peptidylproline (omega=0). In terms of biological role, involved in protein export. Acts as a chaperone by maintaining the newly synthesized protein in an open conformation. Functions as a peptidyl-prolyl cis-trans isomerase. This Prochlorococcus marinus (strain AS9601) protein is Trigger factor.